The chain runs to 819 residues: Mitosis inhibitor protein kinase SWE1 (819 aa).

Ser36 is modified (phosphoserine; by CDC5). A Phosphothreonine; by CDC28 modification is found at Thr45. 2 positions are modified to phosphoserine; by CDC28: Ser56 and Ser63. Phosphoserine is present on Ser70. Thr74 is subject to Phosphothreonine; by CDC28. The interval 86–105 (KIEEEEEEEEEGKDEESVDS) is disordered. Residues 88–102 (EEEEEEEEEGKDEES) are compositionally biased toward acidic residues. Phosphoserine; by CDC5 is present on Ser102. The residue at position 105 (Ser105) is a Phosphoserine; by CDC28. The residue at position 111 (Ser111) is a Phosphoserine; by CDC5, CDC28 and CLA4. A disordered region spans residues 117–168 (ESVTTPITKRSAEKTNSPISLKQWNQRWFPKNDARTENTSSSSSYSVAKPNQ). Ser118 bears the Phosphoserine; by CDC5 mark. Positions 118 to 142 (SVTTPITKRSAEKTNSPISLKQWNQ) are enriched in polar residues. Phosphothreonine; by CDC28 is present on residues Thr121 and Thr124. Ser127 is subject to Phosphoserine; by CDC28. Thr131 carries the phosphothreonine; by CDC5 modification. Phosphoserine; by CDC28 is present on Ser133. Position 136 is a phosphoserine; by CDC28 and CLA4 (Ser136). Phosphoserine; by CDC5 is present on residues Ser156 and Ser169. Thr196 carries the phosphothreonine; by CDC28 modification. The residue at position 201 (Ser201) is a Phosphoserine; by CDC28. Ser225 and Ser254 each carry phosphoserine; by CDC5. Ser262 bears the Phosphoserine mark. A phosphoserine; by CDC28 mark is found at Ser263 and Ser266. The interval 278–297 (NQTNILSPTNSLVTNSSPQT) is disordered. Position 280 is a phosphothreonine; by CDC5 (Thr280). A phosphoserine mark is found at Ser284 and Ser294. Ser312 is subject to Phosphoserine; by CLA4. The segment at 341–395 (PIIISSHHSTRKNPQPYQFRGRYDNDTDEEISTPTRRKSIIGATSQTHRESRPLS) is disordered. Ser345 bears the Phosphoserine mark. Phosphothreonine; by CDC28 is present on residues Thr367 and Thr373. Ser379 bears the Phosphoserine; by CDC5 and CLA4 mark. Phosphothreonine; by CDC28 is present on Thr384. A phosphoserine; by CDC5 and CLA4 mark is found at Ser395 and Ser438. The Protein kinase domain maps to 444-794 (FTNVHSIGKG…NQILQTEECL (351 aa)). ATP is bound by residues 450–458 (IGKGQFSTV) and Lys473. Residue Asp579 is the Proton acceptor of the active site. Mg(2+)-binding residues include Asn584 and Asp597. Residue Ser610 is modified to Phosphoserine; by CDC5. The residue at position 629 (Thr629) is a Phosphothreonine; by CDC5. At Thr688 the chain carries Phosphothreonine; by CDC5 and CLA4. Thr692 bears the Phosphothreonine mark. The span at 707–716 (SNNAGTSTVH) shows a compositional bias: polar residues. The disordered stretch occupies residues 707–736 (SNNAGTSTVHNNSNINNPNMNNGNDNNNVN). Low complexity predominate over residues 717 to 736 (NNSNINNPNMNNGNDNNNVN). Lys741 is covalently cross-linked (Glycyl lysine isopeptide (Lys-Gly) (interchain with G-Cter in ubiquitin)).

It belongs to the protein kinase superfamily. Ser/Thr protein kinase family. WEE1 subfamily. In terms of assembly, interacts with CLB2-CDC28. Partial hyperphosphorylation of SWE1 by CLB2-CDC28 stabilizes the ternary complex of SWE1 and CLB2-CDC28 and stimulates kinase activity of SWE1 in a positive feedback loop, maintaining CLB2-CDC28 in the tyrosine-phosphorylated state. Fully hyperphosphorylated SWE1 dissociates from CLB2-CDC28. Interacts with HSL7, KCC4 and MET30. Ubiquitinated by the SCF(MET30) complex, leading to its degradation by the proteasome. In terms of processing, phosphorylated progressively by CLA4, CLB2-CDC28 and CDC5. CLA4-dependent phosphorylation occurs in late S phase, followed by phosphorylation by CLB2-CDC28 in early G2, when the levels of mitotic CLB2 increases. This phosphorylation is critical for triggering subsequent SWE1-CDC5 interaction and CDC5-dependent phosphorylation. The resulting cumulative hyperphosphorylation down-regulates SWE1 by targeting it for ubiquitin-mediated degradation. This stepwise phosphorylation is thought to be a mechanism to integrate the different checkpoint requirements before entry into mitosis.

The protein resides in the bud neck. It is found in the nucleus. It catalyses the reaction L-seryl-[protein] + ATP = O-phospho-L-seryl-[protein] + ADP + H(+). The enzyme catalyses L-threonyl-[protein] + ATP = O-phospho-L-threonyl-[protein] + ADP + H(+). In terms of biological role, protein kinase that acts as a negative regulator of entry into mitosis (G2 to M transition) by phosphorylating and inhibiting the mitosis-promoting cyclin B-bound CDC28 at 'Tyr-19'. SWE1-mediated inhibition of CDC28 acts in a cell size or morphogenesis checkpoint to delay mitosis in response to defects in growth, actin organization or bud formation. Inhibits the activity of B-type cyclins in replication initiation strongly for CLB2, moderately for CLB3 and CLB4, and there is no apparent inhibition for CLB5 and CLB6, correlating with the normal expression timing of those cyclins. Hyperphosphorylation and degradation of SWE1 when all checkpoint requirement are met releases CLB2-CDC28 from inhibition and allows for progression through the cell cycle. SWE1-dependent CDC28 phosphorylation is also required for pachytene arrest upon activation of the recombination checkpoint during meiosis. Also involved in the regulation of nitrogen starvation- and short chain alcohol-induced filamentous growth, or filamentous differentiation in response to slowed DNA synthesis. Can act both on serines and on tyrosines. The protein is Mitosis inhibitor protein kinase SWE1 (SWE1) of Saccharomyces cerevisiae (strain ATCC 204508 / S288c) (Baker's yeast).